Reading from the N-terminus, the 255-residue chain is MFKVRVIPCLDVKDGRVVKGVNFVDLRDAGDPVEAAIAYDAAGADELCFLDITATHENRGIMLDVVRRTAEACFMPVTVGGGVRTVDDIKTLLRSGADKVSINSAAVARREFVKEAAEKFGDQCIVVAIDAKRVPGRDRWEIFTHGGRKGTGIDAIEFAQEVVSLGAGEILLTSMDRDGTRSGFDLPLTRAIADSIQVPVIASGGVGNLDHLVDGIRDGHATAVLAASIFHFGEYTIRQAKDHMVRCGLPMRLDP.

Active-site residues include Asp-11 and Asp-130.

It belongs to the HisA/HisF family. Heterodimer of HisH and HisF.

Its subcellular location is the cytoplasm. The enzyme catalyses 5-[(5-phospho-1-deoxy-D-ribulos-1-ylimino)methylamino]-1-(5-phospho-beta-D-ribosyl)imidazole-4-carboxamide + L-glutamine = D-erythro-1-(imidazol-4-yl)glycerol 3-phosphate + 5-amino-1-(5-phospho-beta-D-ribosyl)imidazole-4-carboxamide + L-glutamate + H(+). Its pathway is amino-acid biosynthesis; L-histidine biosynthesis; L-histidine from 5-phospho-alpha-D-ribose 1-diphosphate: step 5/9. IGPS catalyzes the conversion of PRFAR and glutamine to IGP, AICAR and glutamate. The HisF subunit catalyzes the cyclization activity that produces IGP and AICAR from PRFAR using the ammonia provided by the HisH subunit. This chain is Imidazole glycerol phosphate synthase subunit HisF, found in Rhodopseudomonas palustris (strain HaA2).